Here is a 776-residue protein sequence, read N- to C-terminus: FT-interacting protein 4 (776 aa).

The segment covering 1 to 16 (MQRPPPEDFSLKETKP) has biased composition (basic and acidic residues). Residues 1–23 (MQRPPPEDFSLKETKPHLGGGKV) form a disordered region. C2 domains follow at residues 22–142 (KVTG…PQWY), 181–305 (VSGT…SRWF), and 346–474 (YSSD…THSY). Ca(2+) is bound by residues aspartate 55, aspartate 61, aspartate 108, aspartate 110, and aspartate 115. Helical transmembrane passes span 577 to 597 (IMGV…ICVW), 608 to 628 (ILFI…FLYL), and 719 to 739 (LFVL…FQVV).

This sequence belongs to the MCTP family. As to quaternary structure, interacts with and regulates subcellular localization and trafficking of STM. Requires Ca(2+) as cofactor. In terms of tissue distribution, highly expressed in both vegetative and inflorescence shoot apical meristems (SAMs). Accumulates in root meristems. Observed in flowers.

It is found in the endoplasmic reticulum membrane. The protein localises to the cytoplasm. Its subcellular location is the vesicle. The protein resides in the cell membrane. It localises to the endosome membrane. It is found in the golgi apparatus membrane. Functionally, required for proliferation and differentiation of shoot stem cells in the shoot apical meristem (SAM), thus determining the appropriate balance between the maintenance of shoot stem cells and their differentiation into other aboveground plant parts via the control of subcellular localization and intercellular trafficking of STM in the shoot apex. Prevents intracellular trafficking of STM to the plasma membrane in cells in the peripheral shoot meristem region thus facilitating STM recycling to the nucleus to maintain stem cells. May function as a signaling molecule by regulating the trafficking of other regulators. In Arabidopsis thaliana (Mouse-ear cress), this protein is FT-interacting protein 4.